The chain runs to 727 residues: Capsid protein VP1 (727 aa).

Basic residues predominate over residues 1–10; the sequence is MAPPAKRARR. 2 disordered regions span residues 1-38 and 95-184; these read MAPP…SDAA and VLTD…VGIS. Residues 4–13 carry the Nuclear localization signal motif; that stretch reads PAKRARRGLV. A phospholipase A2-like region spans residues 19–64; sequence YLGPGNSLDQGEPTNPSDAAAKEHDEAYAAYLRSGKNPYLYFSPAD. Over residues 25–35 the composition is skewed to polar residues; that stretch reads SLDQGEPTNPS. Over residues 166 to 183 the composition is skewed to gly residues; it reads SGNGSGGGGGGGSGGVGI. Asn-323 provides a ligand contact to Mg(2+). The segment at 507 to 536 is disordered; sequence AQTDENQAADGDPRYAFGRQHGQKTTTTGE. Cys-633 and Cys-637 are disulfide-bonded.

The protein belongs to the parvoviridae capsid protein family. In terms of assembly, interacts with host TFRC.

It localises to the virion. It is found in the host nucleus. Capsid protein self-assembles to form an icosahedral capsid with a T=1 symmetry, about 22 nm in diameter, and consisting of 60 copies of two size variants of the capsid proteins, VP1 and VP2, which differ by the presence of an N-terminal extension in the minor protein VP1. The capsid encapsulates the genomic ssDNA. Capsid proteins are responsible for the attachment to host cell receptor TFRC. This attachment induces virion internalization predominantly through clathrin-dependent endocytosis. Binding to the host receptors also induces capsid rearrangements leading to surface exposure of VP1 N-terminus. The sequence is that of Capsid protein VP1 from Feline panleukopenia virus (FPV).